The chain runs to 354 residues: Ribosomal RNA large subunit methyltransferase M (354 aa).

S-adenosyl-L-methionine is bound by residues S183, 216–219, D235, D255, and D271; that span reads SPGG. The active-site Proton acceptor is K300.

This sequence belongs to the class I-like SAM-binding methyltransferase superfamily. RNA methyltransferase RlmE family. RlmM subfamily. Monomer.

It localises to the cytoplasm. It carries out the reaction cytidine(2498) in 23S rRNA + S-adenosyl-L-methionine = 2'-O-methylcytidine(2498) in 23S rRNA + S-adenosyl-L-homocysteine + H(+). In terms of biological role, catalyzes the 2'-O-methylation at nucleotide C2498 in 23S rRNA. The sequence is that of Ribosomal RNA large subunit methyltransferase M from Pseudomonas putida (strain GB-1).